A 268-amino-acid chain; its full sequence is Putative cysteine-rich repeat secretory protein 5 (268 aa).

An N-terminal signal peptide occupies residues 1–24; that stretch reads MTGINTHFAVALFCFFSFSLRAMS. Gnk2-homologous domains are found at residues 27–129 and 135–248; these read SQML…NVSF and DVPS…ISAL.

It belongs to the cysteine-rich repeat secretory protein family.

Its subcellular location is the secreted. The polypeptide is Putative cysteine-rich repeat secretory protein 5 (CRRSP5) (Arabidopsis thaliana (Mouse-ear cress)).